The primary structure comprises 282 residues: Lipoyl synthase (282 aa).

Positions 37, 42, 48, 63, 67, 70, and 275 each coordinate [4Fe-4S] cluster. Positions 49 to 264 (WSRGTATFMI…RLVGIEKGFR (216 aa)) constitute a Radical SAM core domain.

This sequence belongs to the radical SAM superfamily. Lipoyl synthase family. Requires [4Fe-4S] cluster as cofactor.

It localises to the cytoplasm. The enzyme catalyses [[Fe-S] cluster scaffold protein carrying a second [4Fe-4S](2+) cluster] + N(6)-octanoyl-L-lysyl-[protein] + 2 oxidized [2Fe-2S]-[ferredoxin] + 2 S-adenosyl-L-methionine + 4 H(+) = [[Fe-S] cluster scaffold protein] + N(6)-[(R)-dihydrolipoyl]-L-lysyl-[protein] + 4 Fe(3+) + 2 hydrogen sulfide + 2 5'-deoxyadenosine + 2 L-methionine + 2 reduced [2Fe-2S]-[ferredoxin]. Its pathway is protein modification; protein lipoylation via endogenous pathway; protein N(6)-(lipoyl)lysine from octanoyl-[acyl-carrier-protein]: step 2/2. Functionally, catalyzes the radical-mediated insertion of two sulfur atoms into the C-6 and C-8 positions of the octanoyl moiety bound to the lipoyl domains of lipoate-dependent enzymes, thereby converting the octanoylated domains into lipoylated derivatives. The sequence is that of Lipoyl synthase from Porphyromonas gingivalis (strain ATCC 33277 / DSM 20709 / CIP 103683 / JCM 12257 / NCTC 11834 / 2561).